Here is a 25-residue protein sequence, read N- to C-terminus: GLVSSIGKALGGLLADVVKSKGQPA.

As to expression, expressed by the skin parotoid and/or rostral glands.

The protein resides in the secreted. Acts as a male sex pheromone that attracts females. Has no antimicrobial activity. This is Caerin-2.3 from Ranoidea caerulea (Green tree frog).